The sequence spans 320 residues: Cytochrome c biogenesis protein CcsA (320 aa).

8 consecutive transmembrane segments (helical) span residues I9 to L29, G44 to G64, L71 to F91, L99 to L119, M144 to I164, I226 to N246, W261 to L281, and A287 to L307.

The protein belongs to the CcmF/CycK/Ccl1/NrfE/CcsA family. As to quaternary structure, may interact with Ccs1.

Its subcellular location is the plastid. It localises to the chloroplast thylakoid membrane. In terms of biological role, required during biogenesis of c-type cytochromes (cytochrome c6 and cytochrome f) at the step of heme attachment. The sequence is that of Cytochrome c biogenesis protein CcsA from Carica papaya (Papaya).